The sequence spans 264 residues: Regulatory protein RecX (264 aa).

This sequence belongs to the RecX family.

The protein localises to the cytoplasm. Its function is as follows. Modulates RecA activity. The sequence is that of Regulatory protein RecX from Lacticaseibacillus casei (strain BL23) (Lactobacillus casei).